The primary structure comprises 440 residues: Chromosomal replication initiator protein DnaA (440 aa).

The tract at residues 1–69 (MKERILQEIK…VKVVLGNDAT (69 aa)) is domain I, interacts with DnaA modulators. The domain II stretch occupies residues 69–96 (TFEITYEAFEPHSSYSEPLVKKRAVLLT). The interval 97 to 313 (PLNPDYTFEN…GAIIKLLVYK (217 aa)) is domain III, AAA+ region. Residues G140, G142, K143, and T144 each coordinate ATP. The tract at residues 314 to 440 (ETTGKEVDLK…GEISRRALSG (127 aa)) is domain IV, binds dsDNA.

It belongs to the DnaA family. Oligomerizes as a right-handed, spiral filament on DNA at oriC.

The protein resides in the cytoplasm. Plays an essential role in the initiation and regulation of chromosomal replication. ATP-DnaA binds to the origin of replication (oriC) to initiate formation of the DNA replication initiation complex once per cell cycle. Binds the DnaA box (a 9 base pair repeat at the origin) and separates the double-stranded (ds)DNA. Forms a right-handed helical filament on oriC DNA; dsDNA binds to the exterior of the filament while single-stranded (ss)DNA is stabiized in the filament's interior. The ATP-DnaA-oriC complex binds and stabilizes one strand of the AT-rich DNA unwinding element (DUE), permitting loading of DNA polymerase. After initiation quickly degrades to an ADP-DnaA complex that is not apt for DNA replication. Binds acidic phospholipids. This chain is Chromosomal replication initiator protein DnaA, found in Thermotoga sp. (strain RQ2).